Consider the following 117-residue polypeptide: Ribosome-binding factor A (117 aa).

This sequence belongs to the RbfA family. Monomer. Binds 30S ribosomal subunits, but not 50S ribosomal subunits or 70S ribosomes.

The protein localises to the cytoplasm. Its function is as follows. One of several proteins that assist in the late maturation steps of the functional core of the 30S ribosomal subunit. Associates with free 30S ribosomal subunits (but not with 30S subunits that are part of 70S ribosomes or polysomes). Required for efficient processing of 16S rRNA. May interact with the 5'-terminal helix region of 16S rRNA. In Nitrosomonas eutropha (strain DSM 101675 / C91 / Nm57), this protein is Ribosome-binding factor A.